The sequence spans 470 residues: Methylenetetrahydrofolate--tRNA-(uracil-5-)-methyltransferase TrmFO (470 aa).

10–15 provides a ligand contact to FAD; the sequence is GAGLAG.

The protein belongs to the MnmG family. TrmFO subfamily. FAD serves as cofactor.

The protein localises to the cytoplasm. It carries out the reaction uridine(54) in tRNA + (6R)-5,10-methylene-5,6,7,8-tetrahydrofolate + NADH + H(+) = 5-methyluridine(54) in tRNA + (6S)-5,6,7,8-tetrahydrofolate + NAD(+). The catalysed reaction is uridine(54) in tRNA + (6R)-5,10-methylene-5,6,7,8-tetrahydrofolate + NADPH + H(+) = 5-methyluridine(54) in tRNA + (6S)-5,6,7,8-tetrahydrofolate + NADP(+). Catalyzes the folate-dependent formation of 5-methyl-uridine at position 54 (M-5-U54) in all tRNAs. This Prochlorococcus marinus subsp. pastoris (strain CCMP1986 / NIES-2087 / MED4) protein is Methylenetetrahydrofolate--tRNA-(uracil-5-)-methyltransferase TrmFO.